Here is a 468-residue protein sequence, read N- to C-terminus: Argininosuccinate lyase (468 aa).

This sequence belongs to the lyase 1 family. Argininosuccinate lyase subfamily.

The protein resides in the cytoplasm. The catalysed reaction is 2-(N(omega)-L-arginino)succinate = fumarate + L-arginine. Its pathway is amino-acid biosynthesis; L-arginine biosynthesis; L-arginine from L-ornithine and carbamoyl phosphate: step 3/3. This is Argininosuccinate lyase from Paraburkholderia xenovorans (strain LB400).